Consider the following 202-residue polypeptide: Large ribosomal subunit protein bL25 (202 aa).

It belongs to the bacterial ribosomal protein bL25 family. CTC subfamily. As to quaternary structure, part of the 50S ribosomal subunit; part of the 5S rRNA/L5/L18/L25 subcomplex. Contacts the 5S rRNA. Binds to the 5S rRNA independently of L5 and L18.

In terms of biological role, this is one of the proteins that binds to the 5S RNA in the ribosome where it forms part of the central protuberance. The polypeptide is Large ribosomal subunit protein bL25 (Burkholderia ambifaria (strain MC40-6)).